An 80-amino-acid chain; its full sequence is Kappa-actitoxin-Avd4f (80 aa).

Residues 1–19 form the signal peptide; that stretch reads MNKALFLCLVVLCAAVVFA. A propeptide spanning residues 20–31 is cleaved from the precursor; the sequence is AEDLQKAKHAPF. Intrachain disulfides connect C41–C76, C43–C69, and C59–C77.

This sequence belongs to the sea anemone type 3 (BDS) potassium channel toxin family. As to expression, moderately expressed in the ectodermal tissue from the distal and proximal tentacles, body wall, and oral disk.

Its subcellular location is the secreted. It is found in the nematocyst. Functionally, blocks Kv3 voltage-gated potassium channels. Reduces blood pressure. The chain is Kappa-actitoxin-Avd4f from Anemonia viridis (Snakelocks anemone).